The following is a 226-amino-acid chain: Lipoprotein-releasing system ATP-binding protein LolD (226 aa).

The ABC transporter domain occupies 5–225; sequence LELVEIERHF…TLKEKKIVEL (221 aa). 41–48 lines the ATP pocket; that stretch reads APSGAGKS.

This sequence belongs to the ABC transporter superfamily. Lipoprotein translocase (TC 3.A.1.125) family. As to quaternary structure, the complex is composed of two ATP-binding proteins (LolD) and two transmembrane proteins (LolC and LolE).

The protein resides in the cell inner membrane. In terms of biological role, part of the ABC transporter complex LolCDE involved in the translocation of mature outer membrane-directed lipoproteins, from the inner membrane to the periplasmic chaperone, LolA. Responsible for the formation of the LolA-lipoprotein complex in an ATP-dependent manner. The chain is Lipoprotein-releasing system ATP-binding protein LolD from Bartonella quintana (strain Toulouse) (Rochalimaea quintana).